We begin with the raw amino-acid sequence, 605 residues long: Elongation factor 4 (605 aa).

In terms of domain architecture, tr-type G spans 9–192; the sequence is SRTRNFCIIA…AIIARIPSPK (184 aa). GTP-binding positions include 21–26 and 139–142; these read DHGKST and NKID.

The protein belongs to the TRAFAC class translation factor GTPase superfamily. Classic translation factor GTPase family. LepA subfamily.

It localises to the cell inner membrane. The enzyme catalyses GTP + H2O = GDP + phosphate + H(+). Its function is as follows. Required for accurate and efficient protein synthesis under certain stress conditions. May act as a fidelity factor of the translation reaction, by catalyzing a one-codon backward translocation of tRNAs on improperly translocated ribosomes. Back-translocation proceeds from a post-translocation (POST) complex to a pre-translocation (PRE) complex, thus giving elongation factor G a second chance to translocate the tRNAs correctly. Binds to ribosomes in a GTP-dependent manner. The protein is Elongation factor 4 of Chlorobium limicola (strain DSM 245 / NBRC 103803 / 6330).